Here is a 337-residue protein sequence, read N- to C-terminus: Putative F-box protein At4g09870 (337 aa).

In terms of domain architecture, F-box spans 1–46 (MSISELSQDLLEEILCRVPAISLKKLRSTCKLWNSLFIDKRVRNEL).

The chain is Putative F-box protein At4g09870 from Arabidopsis thaliana (Mouse-ear cress).